Here is a 395-residue protein sequence, read N- to C-terminus: NKAP-like protein (395 aa).

Disordered stretches follow at residues 1 to 77 (MSPV…RPLP) and 91 to 247 (CGGY…ISCK). Phosphoserine is present on residues Ser-23 and Ser-25. A compositionally biased stretch (polar residues) spans 25-35 (SPPSALQTSRS). Over residues 109–130 (DQEKEKEESYRQRRLKERERIG) the composition is skewed to basic and acidic residues. Ser-149 is subject to Phosphoserine. Positions 150-161 (DEHTPAEDEVKN) are enriched in basic and acidic residues. Composition is skewed to basic residues over residues 177-197 (KTSH…KHKK) and 214-238 (KKVK…KRTK).

The protein belongs to the NKAP family. In terms of assembly, interacts with RBPJ, CIR1 and HDAC3. In terms of tissue distribution, specific to testis (at protein level). Detected in differenting spermatogonia and early spermatocytes (at protein level).

Its subcellular location is the nucleus. Transcriptional repressor of Notch-mediated signaling. Required for spermatogenesis. The protein is NKAP-like protein of Mus musculus (Mouse).